The primary structure comprises 227 residues: Ribosomal RNA large subunit methyltransferase E (227 aa).

Positions 78, 80, 103, 119, and 143 each coordinate S-adenosyl-L-methionine. Residue lysine 183 is the Proton acceptor of the active site.

Belongs to the class I-like SAM-binding methyltransferase superfamily. RNA methyltransferase RlmE family.

The protein resides in the cytoplasm. The enzyme catalyses uridine(2552) in 23S rRNA + S-adenosyl-L-methionine = 2'-O-methyluridine(2552) in 23S rRNA + S-adenosyl-L-homocysteine + H(+). Functionally, specifically methylates the uridine in position 2552 of 23S rRNA at the 2'-O position of the ribose in the fully assembled 50S ribosomal subunit. The polypeptide is Ribosomal RNA large subunit methyltransferase E (Rickettsia canadensis (strain McKiel)).